The chain runs to 209 residues: CASP-like protein 2A2 (209 aa).

Topologically, residues 1-37 (MSKTAGVGRLGGARAADAAQQQQLAAGDAAVARAARP) are cytoplasmic. A helical transmembrane segment spans residues 38-58 (IETLLRAAPLVLCVAAMTLML). The Extracellular segment spans residues 59 to 79 (RDQQSNEYGTVAYSDLGGFKY). Residues 80-100 (LVYANGLCAAYSLASAFYTAV) form a helical membrane-spanning segment. The Cytoplasmic portion of the chain corresponds to 101 to 109 (PRPATVSRS). A helical transmembrane segment spans residues 110–130 (WVVFLLDQVFTYLILAAGAAA). Residues 131 to 161 (AELLYLAYNGDKEVTWSEACGVFGSFCRQAR) are Extracellular-facing. The helical transmembrane segment at 162–182 (ISVAITFGAVLCFILLSLLSS) threads the bilayer. Residues 183-209 (YRLFSAYEAPPPSALGSKGVEIAAYPR) lie on the Cytoplasmic side of the membrane.

It belongs to the Casparian strip membrane proteins (CASP) family. Homodimer and heterodimers.

It localises to the cell membrane. The chain is CASP-like protein 2A2 from Zea mays (Maize).